The primary structure comprises 105 residues: Met repressor (105 aa).

Belongs to the MetJ family. Homodimer.

It localises to the cytoplasm. In terms of biological role, this regulatory protein, when combined with SAM (S-adenosylmethionine) represses the expression of the methionine regulon and of enzymes involved in SAM synthesis. The sequence is that of Met repressor from Vibrio cholerae serotype O1 (strain ATCC 39541 / Classical Ogawa 395 / O395).